Reading from the N-terminus, the 198-residue chain is Cyclin-dependent kinase inhibitor 1B (198 aa).

Over residues 1–11 (MSNVRVSNGSP) the composition is skewed to polar residues. Residues 1–34 (MSNVRVSNGSPSLERMDARQAEHPKPSACRNLFG) are disordered. Ser10 is modified (phosphoserine; by UHMK1). The segment covering 14–25 (ERMDARQAEHPK) has biased composition (basic and acidic residues). The segment at 51-91 (DMEEASQRKWNFDFQNHKPLEGKYEWQEVEKGSLPEFYYRP) is interaction with CDK2. Tyr74 carries the post-translational modification Phosphotyrosine; by SRC. The tract at residues 85-198 (PEFYYRPPRP…KKPGLRRRQT (114 aa)) is disordered. At Tyr88 the chain carries Phosphotyrosine; by ABL, LYN, SRC and JAK2. Tyr89 carries the phosphotyrosine modification. Basic and acidic residues predominate over residues 126 to 137 (EDTHLVDPKTDP). The short motif at 153 to 169 (KRPATDDSSTQNKRANR) is the Nuclear localization signal element. At Thr157 the chain carries Phosphothreonine; by CaMK1, PKB/AKT1 and PIM1. Thr170 is subject to Phosphothreonine. Over residues 175–186 (SDGSPNAGSVEQ) the composition is skewed to polar residues. Thr187 carries the post-translational modification Phosphothreonine; by PKB/AKT1, CDK1 and CDK2. Thr198 is modified (phosphothreonine; by CaMK1, PKB/AKT1, RPS6KA1, RPS6KA3 and PIM1).

It belongs to the CDI family. In terms of assembly, forms a ternary complex composed of CCNE1, CDK2 and CDKN1B. Interacts directly with CCNE1; the interaction is inhibited by CDK2-dependent phosphorylation on Thr-187. Interacts with COPS5, subunit of the COP9 signalosome complex; the interaction leads to CDKN1B degradation. Interacts with NUP50; the interaction leads to nuclear import and degradation of phosphorylated CDKN1B. Interacts with CCND1 and SNX6. Interacts (Thr-198-phosphorylated form) with 14-3-3 proteins, binds strongly YWHAQ, weakly YWHAE and YWHAH, but not YWHAB nor YWHAZ; the interaction with YWHAQ results in translocation to the cytoplasm. Interacts with AKT1 and LYN; the interactions lead to cytoplasmic mislocation, phosphorylation of CDKN1B and inhibition of cell cycle arrest. Forms a ternary complex with CCNA2 and CDK2; CDKN1B inhibits the kinase activity of CDK2 through conformational rearrangements. Interacts (unphosphorylated form) with CDK2. Forms a complex with CDK2 and SPDYA, but does not directly interact with SPDYA. Forms a ternary complex composed of cyclin D, CDK4 and CDKN1B. Interacts (phosphorylated on Tyr-88 and Tyr-89) with CDK4; the interaction is required for cyclin D and CDK4 complex assembly, induces nuclear translocation and activates the CDK4 kinase activity. Interacts with GRB2. Interacts with PIM1. Identified in a complex with SKP1, SKP2 and CKS1B. Interacts with UHMK1; the interaction leads to cytoplasmic mislocation, phosphorylation of CDKN1B and inhibition of cell cycle arrest. Also interacts with CDK1. Dephosphorylated on Thr-187 by PPM1H, leading to CDKN1B stability. Interacts with HSPA8; the interaction may be associated with susceptibility to ubiquitination. Phosphorylated; phosphorylation occurs on serine, threonine and tyrosine residues. Phosphorylation on Ser-10 is the major site of phosphorylation in resting cells, takes place at the G(0)-G(1) phase and leads to protein stability. Phosphorylation on other sites is greatly enhanced by mitogens, growth factors, cMYC and in certain cancer cell lines. The phosphorylated form found in the cytoplasm is inactivate. Phosphorylation on Thr-198 is required for interaction with 14-3-3 proteins. Phosphorylation on Thr-187, by CDK1 and CDK2 leads to protein ubiquitination and proteasomal degradation. Tyrosine phosphorylation promotes this process. Phosphorylation by PKB/AKT1 can be suppressed by LY294002, an inhibitor of the catalytic subunit of PI3K. Phosphorylation on Tyr-88 and Tyr-89 has no effect on binding CDK2, but is required for binding CDK4. Dephosphorylated on tyrosine residues by G-CSF. In terms of processing, ubiquitinated; in the cytoplasm by the KPC complex (composed of RNF123/KPC1 and UBAC1/KPC2) and, in the nucleus, by SCF(SKP2). The latter requires prior phosphorylation on Thr-187. Ubiquitinated; by a TRIM21-containing SCF(SKP2)-like complex; leads to its degradation. Post-translationally, subject to degradation in the lysosome. Interaction with SNX6 promotes lysosomal degradation. In terms of tissue distribution, expressed in kidney (at protein level). Expressed in all tissues tested. Highest levels in skeletal muscle, lowest in liver and kidney.

The protein resides in the nucleus. It is found in the cytoplasm. The protein localises to the endosome. Functionally, important regulator of cell cycle progression. Inhibits the kinase activity of CDK2 bound to cyclin A, but has little inhibitory activity on CDK2 bound to SPDYA. Involved in G1 arrest. Potent inhibitor of cyclin E- and cyclin A-CDK2 complexes. Forms a complex with cyclin type D-CDK4 complexes and is involved in the assembly, stability, and modulation of CCND1-CDK4 complex activation. Acts either as an inhibitor or an activator of cyclin type D-CDK4 complexes depending on its phosphorylation state and/or stoichometry. This chain is Cyclin-dependent kinase inhibitor 1B, found in Homo sapiens (Human).